We begin with the raw amino-acid sequence, 180 residues long: MSTRFQEHYQSKVVADLIAKFGYKSVMEVPRITKVTLNMGLGDAVNDKKIIENAVGDLTKVAGQKPVVTKAKKAIAGFKIRQGYPIGAMVTLRSSRMYEFLDRFVTVALPRVRDFRGISGKAFDGRGNYNIGVKEQIIFPEIEYDKIDALRGLNISITTTAKTDEEAKALLAAFKFPFRN.

It belongs to the universal ribosomal protein uL5 family. Part of the 50S ribosomal subunit; part of the 5S rRNA/L5/L18/L25 subcomplex. Contacts the 5S rRNA and the P site tRNA. Forms a bridge to the 30S subunit in the 70S ribosome.

Functionally, this is one of the proteins that bind and probably mediate the attachment of the 5S RNA into the large ribosomal subunit, where it forms part of the central protuberance. In the 70S ribosome it contacts protein S13 of the 30S subunit (bridge B1b), connecting the 2 subunits; this bridge is implicated in subunit movement. Contacts the P site tRNA; the 5S rRNA and some of its associated proteins might help stabilize positioning of ribosome-bound tRNAs. The polypeptide is Large ribosomal subunit protein uL5 (Polynucleobacter necessarius subsp. necessarius (strain STIR1)).